We begin with the raw amino-acid sequence, 171 residues long: Small ribosomal subunit protein uS4 (171 aa).

The 65-residue stretch at 104-168 (RRLQTIVYKK…SPFKERAEEA (65 aa)) folds into the S4 RNA-binding domain.

This sequence belongs to the universal ribosomal protein uS4 family. In terms of assembly, part of the 30S ribosomal subunit. Contacts protein S5. The interaction surface between S4 and S5 is involved in control of translational fidelity.

One of the primary rRNA binding proteins, it binds directly to 16S rRNA where it nucleates assembly of the body of the 30S subunit. In terms of biological role, with S5 and S12 plays an important role in translational accuracy. In Aeropyrum pernix (strain ATCC 700893 / DSM 11879 / JCM 9820 / NBRC 100138 / K1), this protein is Small ribosomal subunit protein uS4.